The chain runs to 130 residues: Mitochondrial import protein 1 (130 aa).

Residues Met-1–Ala-41 form a disordered region. Positions Val-15–Tyr-24 are enriched in polar residues. Residues Ser-25 to Ala-41 are compositionally biased toward low complexity.

The protein belongs to the MIM1 family.

Its subcellular location is the mitochondrion outer membrane. Required for the assembly of the TOM (translocase of outer membrane) receptor complex, which is responsible for the recognition and translocation of cytosolically synthesized mitochondrial preproteins. This chain is Mitochondrial import protein 1, found in Neurospora crassa (strain ATCC 24698 / 74-OR23-1A / CBS 708.71 / DSM 1257 / FGSC 987).